Here is a 216-residue protein sequence, read N- to C-terminus: Soluble inorganic pyrophosphatase 4 (216 aa).

Serine 18 is modified (phosphoserine). The substrate site is built by lysine 66 and arginine 80. Tyrosine 88 (proton donor) is an active-site residue. Tyrosine 92 is a substrate binding site. Aspartate 102, aspartate 107, and aspartate 139 together coordinate Mg(2+). Tyrosine 176 is a substrate binding site.

This sequence belongs to the PPase family. Monomer. Mg(2+) is required as a cofactor. In terms of tissue distribution, ubiquitous, excepted in pollen. Very low expression in cork, xylem and hypocotyls.

It localises to the cytoplasm. It carries out the reaction diphosphate + H2O = 2 phosphate + H(+). Inhibited by Zn(2+), Ca(2+), Ba(2+), Fe(2+), Co(2+), Cu(2+), Eu(2+), Eu(3+) and Mn(2+). Catalyzes the irreversible hydrolysis of pyrophosphate (PPi) to phosphate. The MgPPi(2-) complex binds to the enzyme only after a free Mg(2+) ion has bound. No activity with glycerol-3-phosphate, glucose-6-phosphate, p-nitrophenylphosphate, ADP, NADP(+), NAD(+),NADH, NADPH or phosphoribosyl pyrophosphate as substrates. This is Soluble inorganic pyrophosphatase 4 from Arabidopsis thaliana (Mouse-ear cress).